Consider the following 286-residue polypeptide: Light-independent protochlorophyllide reductase iron-sulfur ATP-binding protein (286 aa).

Residues 10–15 (GIGKST) and K39 contribute to the ATP site. Residue S14 participates in Mg(2+) binding. The [4Fe-4S] cluster site is built by C95 and C129. Residue 180–181 (NR) coordinates ATP.

The protein belongs to the NifH/BchL/ChlL family. In terms of assembly, homodimer. Protochlorophyllide reductase is composed of three subunits; ChlL, ChlN and ChlB. The cofactor is [4Fe-4S] cluster.

The enzyme catalyses chlorophyllide a + oxidized 2[4Fe-4S]-[ferredoxin] + 2 ADP + 2 phosphate = protochlorophyllide a + reduced 2[4Fe-4S]-[ferredoxin] + 2 ATP + 2 H2O. Its pathway is porphyrin-containing compound metabolism; chlorophyll biosynthesis (light-independent). Component of the dark-operative protochlorophyllide reductase (DPOR) that uses Mg-ATP and reduced ferredoxin to reduce ring D of protochlorophyllide (Pchlide) to form chlorophyllide a (Chlide). This reaction is light-independent. The L component serves as a unique electron donor to the NB-component of the complex, and binds Mg-ATP. This is Light-independent protochlorophyllide reductase iron-sulfur ATP-binding protein from Synechococcus elongatus (strain ATCC 33912 / PCC 7942 / FACHB-805) (Anacystis nidulans R2).